Here is a 139-residue protein sequence, read N- to C-terminus: Large ribosomal subunit protein uL16 (139 aa).

It belongs to the universal ribosomal protein uL16 family. Part of the 50S ribosomal subunit.

In terms of biological role, binds 23S rRNA and is also seen to make contacts with the A and possibly P site tRNAs. The polypeptide is Large ribosomal subunit protein uL16 (Koribacter versatilis (strain Ellin345)).